Consider the following 166-residue polypeptide: Phospholipase A2 inhibitor A1 (166 aa).

An N-terminal signal peptide occupies residues Met1 to Gly19. Positions Leu46 to Glu161 constitute a C-type lectin domain. Disulfide bonds link Cys83/Cys160 and Cys138/Cys152. N-linked (GlcNAc...) asparagine glycosylation occurs at Asn122.

It belongs to the alpha-type phospholipase A2 inhibitor family. Homotrimer; non-covalently linked. In terms of tissue distribution, expressed by the liver.

The protein localises to the secreted. Its function is as follows. This phospholipase A2 inhibitor binds directly phospholipase A2 in the presence or absence of calcium. This is Phospholipase A2 inhibitor A1 from Bothrops neuwiedi (Neuwied's lancehead).